We begin with the raw amino-acid sequence, 100 residues long: MAKKSLIEREKKRQKLEKKYQDFRHSIKKKIKETSSLDEKWEFQKQLQALPRNSAPTRLHRRCFLTGRPRANYRDFGLSRHVLREMAHACFLPGVTKSSW.

This sequence belongs to the universal ribosomal protein uS14 family. As to quaternary structure, part of the 30S ribosomal subunit.

It localises to the plastid. Its subcellular location is the chloroplast. Binds 16S rRNA, required for the assembly of 30S particles. In Physcomitrium patens (Spreading-leaved earth moss), this protein is Small ribosomal subunit protein uS14c.